The sequence spans 671 residues: DNA ligase (671 aa).

Residues 32–36 (DAEYD), 81–82 (SL), and glutamate 113 each bind NAD(+). Lysine 115 acts as the N6-AMP-lysine intermediate in catalysis. Positions 136, 173, 290, and 314 each coordinate NAD(+). Zn(2+) is bound by residues cysteine 408, cysteine 411, cysteine 426, and cysteine 432. A BRCT domain is found at 593 to 671 (EIDSPFAGKT…EAEMLRLLGS (79 aa)).

It belongs to the NAD-dependent DNA ligase family. LigA subfamily. Mg(2+) is required as a cofactor. Mn(2+) serves as cofactor.

It catalyses the reaction NAD(+) + (deoxyribonucleotide)n-3'-hydroxyl + 5'-phospho-(deoxyribonucleotide)m = (deoxyribonucleotide)n+m + AMP + beta-nicotinamide D-nucleotide.. Its function is as follows. DNA ligase that catalyzes the formation of phosphodiester linkages between 5'-phosphoryl and 3'-hydroxyl groups in double-stranded DNA using NAD as a coenzyme and as the energy source for the reaction. It is essential for DNA replication and repair of damaged DNA. In Escherichia coli (strain SE11), this protein is DNA ligase.